The primary structure comprises 500 residues: Lysine--tRNA ligase (500 aa).

Residues Glu-411 and Glu-418 each contribute to the Mg(2+) site.

It belongs to the class-II aminoacyl-tRNA synthetase family. Homodimer. Mg(2+) serves as cofactor.

Its subcellular location is the cytoplasm. The catalysed reaction is tRNA(Lys) + L-lysine + ATP = L-lysyl-tRNA(Lys) + AMP + diphosphate. The polypeptide is Lysine--tRNA ligase (Actinobacillus pleuropneumoniae serotype 5b (strain L20)).